A 272-amino-acid polypeptide reads, in one-letter code: MTVFAASQQSAAGAGMLPSHQARLACRAGQADTTAGVAPGYVQGNLAILPEKFAAAFHRFCQLNPKPCPIIGMSDVGNPMIPALGLDLDIRTDLPRYRVWRDGEVIEEPTDIMAHWRDDLVAFVIGCSFSFEEALLADDIAIRHIDCKVRVPMYRTNIPCAPAGPFAGPMVVSMRPMKPKDAIRAVQITSRFPSVHGAPVHIGLPQSIGIADIAKPDYGDPVPIADDELPVFWACGVTPQAVIAAAKVPFAITHAPGLMLVTDLKNKHLAVL.

It belongs to the D-glutamate cyclase family.

This chain is Putative hydro-lyase RPB_3621, found in Rhodopseudomonas palustris (strain HaA2).